The sequence spans 403 residues: S-adenosylmethionine synthase (403 aa).

Position 17 (His17) interacts with ATP. Asp19 contacts Mg(2+). Glu45 is a K(+) binding site. L-methionine contacts are provided by Glu58 and Gln104. The tract at residues 104 to 114 (QSPDIAQGVDT) is flexible loop. Residues 179–181 (DGK), 250–251 (KF), Asp259, 265–266 (RK), Ala282, and Lys286 contribute to the ATP site. Asp259 is a binding site for L-methionine. Lys290 contacts L-methionine.

Belongs to the AdoMet synthase family. Homotetramer; dimer of dimers. Mg(2+) serves as cofactor. Requires K(+) as cofactor.

It is found in the cytoplasm. The catalysed reaction is L-methionine + ATP + H2O = S-adenosyl-L-methionine + phosphate + diphosphate. It participates in amino-acid biosynthesis; S-adenosyl-L-methionine biosynthesis; S-adenosyl-L-methionine from L-methionine: step 1/1. Its function is as follows. Catalyzes the formation of S-adenosylmethionine (AdoMet) from methionine and ATP. The overall synthetic reaction is composed of two sequential steps, AdoMet formation and the subsequent tripolyphosphate hydrolysis which occurs prior to release of AdoMet from the enzyme. This Mycolicibacterium paratuberculosis (strain ATCC BAA-968 / K-10) (Mycobacterium paratuberculosis) protein is S-adenosylmethionine synthase.